Consider the following 306-residue polypeptide: Nod factor export ATP-binding protein I (306 aa).

Residues Ile-8–Tyr-238 enclose the ABC transporter domain. Gly-40–Ser-47 provides a ligand contact to ATP.

This sequence belongs to the ABC transporter superfamily. Lipooligosaccharide exporter (TC 3.A.1.102) family. The complex is composed of two ATP-binding proteins (NodI) and two transmembrane proteins (NodJ).

The protein resides in the cell inner membrane. Its function is as follows. Part of the ABC transporter complex NodIJ involved in the export of the nodulation factors (Nod factors), the bacterial signal molecules that induce symbiosis and subsequent nodulation induction. Nod factors are LCO (lipo-chitin oligosaccharide), a modified beta-1,4-linked N-acetylglucosamine oligosaccharide. This subunit is responsible for energy coupling to the transport system. This chain is Nod factor export ATP-binding protein I, found in Bradyrhizobium diazoefficiens (strain JCM 10833 / BCRC 13528 / IAM 13628 / NBRC 14792 / USDA 110).